Reading from the N-terminus, the 320-residue chain is Acetyl-coenzyme A carboxylase carboxyl transferase subunit alpha (320 aa).

Residues 34-288 (RLEEALEAAR…GEALERVLAG (255 aa)) enclose the CoA carboxyltransferase C-terminal domain.

It belongs to the AccA family. Acetyl-CoA carboxylase is a heterohexamer composed of biotin carboxyl carrier protein (AccB), biotin carboxylase (AccC) and two subunits each of ACCase subunit alpha (AccA) and ACCase subunit beta (AccD).

Its subcellular location is the cytoplasm. The catalysed reaction is N(6)-carboxybiotinyl-L-lysyl-[protein] + acetyl-CoA = N(6)-biotinyl-L-lysyl-[protein] + malonyl-CoA. Its pathway is lipid metabolism; malonyl-CoA biosynthesis; malonyl-CoA from acetyl-CoA: step 1/1. Its function is as follows. Component of the acetyl coenzyme A carboxylase (ACC) complex. First, biotin carboxylase catalyzes the carboxylation of biotin on its carrier protein (BCCP) and then the CO(2) group is transferred by the carboxyltransferase to acetyl-CoA to form malonyl-CoA. The polypeptide is Acetyl-coenzyme A carboxylase carboxyl transferase subunit alpha (Rubrobacter xylanophilus (strain DSM 9941 / JCM 11954 / NBRC 16129 / PRD-1)).